The following is a 308-amino-acid chain: Cyclopropane mycolic acid synthase 2 (308 aa).

Residues 44–45, 79–87, 105–110, and 137–138 each bind S-adenosyl-L-methionine; these read YS, LLDIGCGWG, TLSANQ, and WE. Residue cysteine 290 is part of the active site.

It belongs to the CFA/CMAS family. Homodimer.

It localises to the cytoplasm. It catalyses the reaction a 1-acyl-2-(9Z)-enoyl-sn-glycero-3-phospholipid + S-adenosyl-L-methionine = a 1-acyl-2-(9-cyclopronane)-acyl-sn-glycero-3-phospholipid + S-adenosyl-L-homocysteine + H(+). The protein operates within lipid metabolism; mycolic acid biosynthesis. Catalyzes the formation of trans cyclopropanated ketomycolate or methoxymycolate through the conversion of a double bond to a cyclopropane ring at the proximal position of an oxygenated mycolic acid via the transfer of a methylene group from S-adenosyl-L-methionine. In the absence of MmaA2, CmaA2 has a non-specific cis-cyclopropanating activity and is able to catalyze the conversion of a double bond to a cis cyclopropane ring at the distal position of an alpha mycolic acid. Cyclopropanated mycolic acids are key factors participating in cell envelope permeability, host immunomodulation and persistence. This chain is Cyclopropane mycolic acid synthase 2 (cmaA2), found in Mycobacterium leprae (strain TN).